Reading from the N-terminus, the 86-residue chain is Small ribosomal subunit protein bS18c (86 aa).

It belongs to the bacterial ribosomal protein bS18 family. In terms of assembly, part of the 30S ribosomal subunit.

It is found in the plastid. It localises to the chloroplast. The chain is Small ribosomal subunit protein bS18c from Larix laricina (Tamarack).